Consider the following 596-residue polypeptide: Delta(24(24(1)))-sterol reductase (596 aa).

Positions Met1 to Ser122 are disordered. A compositionally biased stretch (gly residues) spans Asn98 to Asn112. 8 helical membrane-spanning segments follow: residues Phe168–Ala188, Val225–Gly245, Trp269–Leu289, Phe296–Phe316, Met353–Ala373, Tyr381–Ala401, Gly419–Ile439, and Gly454–Asn474. NADP(+) is bound by residues Lys477, Arg481, Leu516, and His528–Tyr529. The chain crosses the membrane as a helical span at residues Phe535–Phe557. Residues Asp568, Cys572 to Tyr576, and Tyr583 contribute to the NADP(+) site.

It belongs to the ERG4/ERG24 family.

Its subcellular location is the endoplasmic reticulum membrane. It carries out the reaction ergosterol + NADP(+) = ergosta-5,7,22,24(28)-tetraen-3beta-ol + NADPH + H(+). It functions in the pathway steroid metabolism; ergosterol biosynthesis. In terms of biological role, delta(24(24(1)))-sterol reductase; part of the third module of ergosterol biosynthesis pathway that includes the late steps of the pathway. ERG4 catalyzes the last step of ergosterol biosynthesis by converting ergosta-5,7,22,24(28)-tetraen-3beta-ol into ergosterol. The third module or late pathway involves the ergosterol synthesis itself through consecutive reactions that mainly occur in the endoplasmic reticulum (ER) membrane. Firstly, the squalene synthase ERG9 catalyzes the condensation of 2 farnesyl pyrophosphate moieties to form squalene, which is the precursor of all steroids. Squalene synthase is crucial for balancing the incorporation of farnesyl diphosphate (FPP) into sterol and nonsterol isoprene synthesis. Secondly, squalene is converted into lanosterol by the consecutive action of the squalene epoxidase ERG1 and the lanosterol synthase ERG7. Then, the delta(24)-sterol C-methyltransferase ERG6 methylates lanosterol at C-24 to produce eburicol. Eburicol is the substrate of the sterol 14-alpha demethylase encoded by CYP51A, CYP51B and CYP51C, to yield 4,4,24-trimethyl ergosta-8,14,24(28)-trienol. CYP51B encodes the enzyme primarily responsible for sterol 14-alpha-demethylation, and plays an essential role in ascospore formation. CYP51A encodes an additional sterol 14-alpha-demethylase, induced on ergosterol depletion and responsible for the intrinsic variation in azole sensitivity. The third CYP51 isoform, CYP51C, does not encode a sterol 14-alpha-demethylase, but is required for full virulence on host wheat ears. The C-14 reductase ERG24 then reduces the C14=C15 double bond which leads to 4,4-dimethylfecosterol. A sequence of further demethylations at C-4, involving the C-4 demethylation complex containing the C-4 methylsterol oxidases ERG25, the sterol-4-alpha-carboxylate 3-dehydrogenase ERG26 and the 3-keto-steroid reductase ERG27, leads to the production of fecosterol via 4-methylfecosterol. ERG28 has a role as a scaffold to help anchor ERG25, ERG26 and ERG27 to the endoplasmic reticulum. The C-8 sterol isomerase ERG2 then catalyzes the reaction which results in unsaturation at C-7 in the B ring of sterols and thus converts fecosterol to episterol. The sterol-C5-desaturases ERG3A and ERG3BB then catalyze the introduction of a C-5 double bond in the B ring to produce 5-dehydroepisterol. The C-22 sterol desaturases ERG5A and ERG5B further convert 5-dehydroepisterol into ergosta-5,7,22,24(28)-tetraen-3beta-ol by forming the C-22(23) double bond in the sterol side chain. Finally, ergosta-5,7,22,24(28)-tetraen-3beta-ol is substrate of the C-24(28) sterol reductase ERG4 to produce ergosterol. In Gibberella zeae (strain ATCC MYA-4620 / CBS 123657 / FGSC 9075 / NRRL 31084 / PH-1) (Wheat head blight fungus), this protein is Delta(24(24(1)))-sterol reductase.